The following is a 78-amino-acid chain: Large ribosomal subunit protein bL28 (78 aa).

Positions 1 to 23 are disordered; that stretch reads MSRVCQVTGKKPMVGNNRSHAKN.

This sequence belongs to the bacterial ribosomal protein bL28 family.

This is Large ribosomal subunit protein bL28 from Shewanella sediminis (strain HAW-EB3).